The chain runs to 1276 residues: cGMP-specific 3',5'-cyclic phosphodiesterase (1276 aa).

Disordered regions lie at residues 1 to 76, 91 to 185, and 241 to 260; these read MHEL…TAAG, NQVK…QQDV, and ASPT…SASS. Low complexity-rich tracts occupy residues 12 to 47 and 57 to 76; these read SSSS…SSAS and TSTA…TAAG. Positions 109-124 are enriched in pro residues; sequence APYPPVPAAKPKPTPT. The span at 129–140 shows a compositional bias: basic and acidic residues; the sequence is SKFKSTSREVDV. Residues 147-166 show a composition bias toward polar residues; that stretch reads ARSSTISPGVSIHTQTIQQE. 2 stretches are compositionally biased toward low complexity: residues 167-180 and 249-260; these read SSSA…SSSS and SPRSLSNSSASS. GAF domains follow at residues 290–442 and 474–658; these read DIDV…GIGI and NLEC…GLGI. The region spanning 688–1119 is the PDEase domain; it reads SQDQTEKLTQ…RNWQDLAEKV (432 aa). The active-site Proton donor is the His-764. The a divalent metal cation site is built by His-768, His-804, Asp-805, and Asp-1023. Disordered regions lie at residues 1162–1193 and 1205–1276; these read AQHG…TGAL and LYNS…CSLL. Composition is skewed to basic and acidic residues over residues 1171-1180 and 1221-1233; these read DDSHTPEHQR and LESH…DDKS. Positions 1248 to 1263 are enriched in low complexity; sequence GRMSASSSTSSAGTVV. Over residues 1266–1276 the composition is skewed to basic residues; the sequence is SKKRSKLCSLL. Cys-1273 is modified (cysteine methyl ester). A lipid anchor (S-farnesyl cysteine) is attached at Cys-1273. Residues 1274 to 1276 constitute a propeptide, removed in mature form; it reads SLL.

Belongs to the cyclic nucleotide phosphodiesterase family. Interacts with PrBP. Requires a divalent metal cation as cofactor.

The protein resides in the cell membrane. It carries out the reaction 3',5'-cyclic GMP + H2O = GMP + H(+). Its function is as follows. Has a role regulating cGMP transport in Malpighian tubule principal cells. The protein is cGMP-specific 3',5'-cyclic phosphodiesterase of Drosophila persimilis (Fruit fly).